A 163-amino-acid chain; its full sequence is Nucleotide-binding protein Dvul_1191 (163 aa).

It belongs to the YajQ family.

Nucleotide-binding protein. This chain is Nucleotide-binding protein Dvul_1191, found in Nitratidesulfovibrio vulgaris (strain DP4) (Desulfovibrio vulgaris).